The primary structure comprises 212 residues: Peptide methionine sulfoxide reductase MsrA (212 aa).

The active site involves Cys-52.

This sequence belongs to the MsrA Met sulfoxide reductase family.

The catalysed reaction is L-methionyl-[protein] + [thioredoxin]-disulfide + H2O = L-methionyl-(S)-S-oxide-[protein] + [thioredoxin]-dithiol. It catalyses the reaction [thioredoxin]-disulfide + L-methionine + H2O = L-methionine (S)-S-oxide + [thioredoxin]-dithiol. Functionally, has an important function as a repair enzyme for proteins that have been inactivated by oxidation. Catalyzes the reversible oxidation-reduction of methionine sulfoxide in proteins to methionine. The sequence is that of Peptide methionine sulfoxide reductase MsrA from Escherichia fergusonii (strain ATCC 35469 / DSM 13698 / CCUG 18766 / IAM 14443 / JCM 21226 / LMG 7866 / NBRC 102419 / NCTC 12128 / CDC 0568-73).